A 511-amino-acid polypeptide reads, in one-letter code: MFLEVLFAAPLVIFIFRKLWAHLNRTYFILSLCKRIRTEDGSLLESKIYVAPSKTRFGNNFDLVNFTSESIFNFMRDASAKAKGRNYLWYFFHAPMYNIVRAEEAEEILQSSKLITKNMIYELLKPFLGEGLLISTDQKWHSRRKALTPAFHFKVLQSFLIIFKEECNKLVKVLHQSVNMELELNQVIPQFTLNNVCETALGVKLDDLSEGIRYRQSIHAIEEVMQQRLCNPFFYNIVYFFLFGDYRKQVNNLKIAHEFSSNIIEKRRSLFKSNQLGQEDEFGKKQRYAMLDTLLAAEADGQIDHQGICDEVNTFMFEGYDTTSTCLIFTLLMLALHEDVQKKCYEEIKYLPDDSDDISVFQFNELVYMECVIKESLRLFPSVPFIGRRCVEEGVVNGLIMPKNTQINIHLYEIMRDARHFSNPKMFQPDRFFPENTVNRHPFAFVPFSAGQRNCIGQKFAILEIKVLLAAVIRNFKILPVTLLDDLTFENGIVLRTKQNIKVKLVHRENK.

Heme contacts are provided by E318 and C455.

Belongs to the cytochrome P450 family. Requires heme as cofactor.

It is found in the endoplasmic reticulum membrane. The protein localises to the microsome membrane. Functionally, may be involved in the metabolism of insect hormones and in the breakdown of synthetic insecticides. The chain is Probable cytochrome P450 4ac2 (Cyp4ac2) from Drosophila melanogaster (Fruit fly).